Reading from the N-terminus, the 75-residue chain is Small ribosomal subunit protein bS18 (75 aa).

It belongs to the bacterial ribosomal protein bS18 family. Part of the 30S ribosomal subunit. Forms a tight heterodimer with protein bS6.

Binds as a heterodimer with protein bS6 to the central domain of the 16S rRNA, where it helps stabilize the platform of the 30S subunit. The sequence is that of Small ribosomal subunit protein bS18 from Pasteurella multocida (strain Pm70).